Consider the following 264-residue polypeptide: uncharacterized protein (264 aa).

The first 23 residues, 1–23 (MQQWNLTISNILIGLFFCFSAQA), serve as a signal peptide directing secretion.

This is an uncharacterized protein from Shewanella oneidensis (strain ATCC 700550 / JCM 31522 / CIP 106686 / LMG 19005 / NCIMB 14063 / MR-1).